We begin with the raw amino-acid sequence, 235 residues long: Purine nucleoside phosphorylase DeoD-type (235 aa).

His4 is a binding site for a purine D-ribonucleoside. Residues Gly20, Arg24, Arg43, and 87–90 each bind phosphate; that span reads RVGT. A purine D-ribonucleoside contacts are provided by residues Glu162, 179–181, and 203–204; these read EME and SD. Asp204 serves as the catalytic Proton donor.

Belongs to the PNP/UDP phosphorylase family. Homohexamer; trimer of homodimers.

The enzyme catalyses a purine D-ribonucleoside + phosphate = a purine nucleobase + alpha-D-ribose 1-phosphate. It catalyses the reaction a purine 2'-deoxy-D-ribonucleoside + phosphate = a purine nucleobase + 2-deoxy-alpha-D-ribose 1-phosphate. Catalyzes the reversible phosphorolytic breakdown of the N-glycosidic bond in the beta-(deoxy)ribonucleoside molecules, with the formation of the corresponding free purine bases and pentose-1-phosphate. The protein is Purine nucleoside phosphorylase DeoD-type of Bacillus cereus (strain ZK / E33L).